A 244-amino-acid polypeptide reads, in one-letter code: tRNA uridine(34) hydroxylase (244 aa).

Positions 129–219 (QGRELVMLDT…GILKYFEETD (91 aa)) constitute a Rhodanese domain. The Cysteine persulfide intermediate role is filled by Cys183.

It belongs to the TrhO family.

The catalysed reaction is uridine(34) in tRNA + AH2 + O2 = 5-hydroxyuridine(34) in tRNA + A + H2O. Functionally, catalyzes oxygen-dependent 5-hydroxyuridine (ho5U) modification at position 34 in tRNAs. The protein is tRNA uridine(34) hydroxylase of Bordetella bronchiseptica (strain ATCC BAA-588 / NCTC 13252 / RB50) (Alcaligenes bronchisepticus).